We begin with the raw amino-acid sequence, 504 residues long: uncharacterized protein (504 aa).

Positions 1 to 212 (MFMKSKAAGS…LYKTQDPVLD (212 aa)) are excised as a propeptide.

This is an uncharacterized protein from Deinococcus radiodurans (strain ATCC 13939 / DSM 20539 / JCM 16871 / CCUG 27074 / LMG 4051 / NBRC 15346 / NCIMB 9279 / VKM B-1422 / R1).